The following is a 99-amino-acid chain: High mobility group protein I (99 aa).

A disordered region spans residues 1–99 (MSDSPVKKGR…ADTEEVNSSD (99 aa)). Position 4 is a phosphoserine; by CDC2 and MAPK (Ser4). The a.T hook 1 DNA-binding region spans 7–19 (KKGRGRPAKAKPE). Residues 16 to 46 (AKPEETASPKAAKKEEKKVEEVPKKIEESTK) show a composition bias toward basic and acidic residues. Ser23 bears the Phosphoserine; by MAPK mark. Positions 54 to 66 (KKGRGRPSKGDKA) form a DNA-binding region, a.T hook 2. Ser73 carries the phosphoserine; by PKC modification. The segment at residues 74 to 86 (GKGRGRPAKNAKK) is a DNA-binding region (a.T hook 3). Over residues 90–99 (ADTEEVNSSD) the composition is skewed to acidic residues.

The protein belongs to the HMGA family. Post-translationally, phosphorylated in a cell-cycle dependent manner; substantially reduced in cells that have finished proliferating and are differentiated. Phosphorylation at Ser-4 and Ser-23 results in a 10-fold weakening of DNA-binding activity and altered the mode of protein-DNA interaction.

The protein resides in the nucleus. It is found in the nucleolus. It localises to the chromosome. In terms of biological role, binds preferentially to the minor groove of A+T rich regions in double-stranded DNA via the second and third DBA-binding domains. It is suggested that these proteins could function in nucleosome phasing and in the 3'-end processing of mRNA transcripts. They are also involved in the transcription regulation of genes containing, or in close proximity to A+T-rich regions. This Chironomus tentans (Midge) protein is High mobility group protein I.